The primary structure comprises 1413 residues: MNQELTNNPFNPLTPPKVFDEIKVSLASPERILSWSYGEIKKPETINYRTFKPERDGLFCARIFGPIKDYECLCGKYKRMKYRGVVCEKCGVEVTLQKVRRERMGHIELAAPVAHIWFLKSLPSRIGLMLDMTLRDLERILYFENYVVTEPGLTDLTYGQLMTEEEFMDAQDQYGMDAFTANIGAEAIREMLSQIDLEAEAEQLRADLAEATGELKPKKIIKRLKVVESFLESGNRPEWMVLTVIPVIPPELRPLVPLDGGRFATSDLNDLYRRVINRNNRLKRLIELRAPDIIVRNEKRMLQESVDALFDNGRRGRVITGANKRPLKSLSDMLKGKQGRFRQNLLGKRVDFSGRSVIVTGPELKLHQCGLPKKMALELFKPFIYSRLEAKGLSSTVKQAKKLVEKERPEVWDILDEVIREHPVLLNRAPTLHRLGIQAFEPILIEGKAIQLHPLVCSAFNADFDGDQMAVHVPLSLEAQLEARVLMMSTNNVLSPANGAPIIVPSQDMILGLYYLTLEREGMVGEGKIFGSIDEVQHALDAGEVHLHTKITARIAQIDDEGNEVLKRVETTPGRVRLGALLPMNNKAPFELVNRLLRKKEVQQVIDTVYRYCGQKESVIFCDQIMTMGFREAFKAGISFGKDDMVIPDDKWGIVDETRDQVKDFEQQYMDGLITQGEKYNKVVDAWSKCNDRVTEAMMSTISADKRDENGAVMEPNSVYMMAHSGARGSVTQMKQLGGMRGLMAKPNGDIIETPIISNFKEGLTVLEYFNSTHGARKGLSDTALKTANSGYLTRRLVDVAQDCIVREHDCGTDRGVTAEAAVNDGEVVASLAERVLGRVAADDILRPGTEEVLVAAGQLIDERMADAIHEAGVQTSRVRSPLTCESEEGVCAMCYGRDLARGTMVNQGEAVGIIAAQSIGEPGTQLTMRTFHIGGVAQGGQQSFQEANQDGTITFENPQLLLNASGESLVMGRNMKLLIKDAQGEERASFKLGYGSKLFVKDGAQIKRGDKLFEWDPYTLPIIAEKAGTAKYVDLVSGIAVRDETDEATGMTQKIVIDWRAAPKGSDLKPEIILVDSDGEPVRNDAGNPVHYPMSVDAILSIEDGQVIEAGDVIARIPREGAKTKDITGGLPRVAELFEARRPKDHAIIAEIDGYVRFGRDYKNKRRISIEPSNEAMEPVEYMVPKGKHIPVQEGDFVQKGDYIMDGNPAPHDILSILGVEALANYMVKEVQEVYRLQGVKINDKHIEVIVRQMLQKWEISDSGDTTLLKGEHVDKQEFDAANEKTIARGGRPASGEPILLGITKASLQTRSFISAASFQETTRVLTEASVQGKKDKLVGLKENVIVGRLIPAGTGGATQQMRHIATQRDNVVIAARREEAEAAAALAAPIMDADIVDDDFDTLVDTPESRD.

Positions 72, 74, 87, and 90 each coordinate Zn(2+). Residues D463, D465, and D467 each contribute to the Mg(2+) site. Residues C811, C885, C892, and C895 each contribute to the Zn(2+) site.

It belongs to the RNA polymerase beta' chain family. In terms of assembly, the RNAP catalytic core consists of 2 alpha, 1 beta, 1 beta' and 1 omega subunit. When a sigma factor is associated with the core the holoenzyme is formed, which can initiate transcription. Requires Mg(2+) as cofactor. Zn(2+) is required as a cofactor.

The enzyme catalyses RNA(n) + a ribonucleoside 5'-triphosphate = RNA(n+1) + diphosphate. DNA-dependent RNA polymerase catalyzes the transcription of DNA into RNA using the four ribonucleoside triphosphates as substrates. The polypeptide is DNA-directed RNA polymerase subunit beta' (Ruegeria pomeroyi (strain ATCC 700808 / DSM 15171 / DSS-3) (Silicibacter pomeroyi)).